The primary structure comprises 458 residues: Vacuolar basic amino acid transporter 3 (458 aa).

At 1–9 (MNMLIVGRV) the chain is on the cytoplasmic side. A helical membrane pass occupies residues 10–30 (VASVGGSGLQTLCFVIGCTMV). The Vacuolar portion of the chain corresponds to 31–36 (GERSRP). Residues 37-57 (LVISILSCAFAVAAIVGPIIG) traverse the membrane as a helical segment. The Cytoplasmic segment spans residues 58 to 67 (GAFTTHVTWR). Residues 68–88 (WCFYINLPIGGLAIIMFLLTY) form a helical membrane-spanning segment. Residues 89–132 (KAENKGILQQIKDAIGTISSFTFSKFRHQVNFKRLMNGIIFKFD) are Vacuolar-facing. The chain crosses the membrane as a helical span at residues 133–153 (FFGFALCSAGLVLFLLGLTFG). Residues 154 to 163 (GNKYSWNSGQ) lie on the Cytoplasmic side of the membrane. Residues 164–184 (VIAYLVLGVLLFIFSLVYDFF) traverse the membrane as a helical segment. The Vacuolar portion of the chain corresponds to 185–205 (LFDKFNPEPDNISYRPLLLRR). An N-linked (GlcNAc...) asparagine glycan is attached at Asn195. The chain crosses the membrane as a helical span at residues 206-226 (LVAKPAIIIINMVTFLLCTGY). Over 227–248 (NGQMIYSVQFFQLIFASSAWKA) the chain is Cytoplasmic. Residues 249-269 (GLHLIPIVITNVIAAIASGVI) form a helical membrane-spanning segment. At 270–277 (TKKLGLVK) the chain is on the vacuolar side. A helical membrane pass occupies residues 278–298 (PLLIFGGVLGVIGAGLMTLMT). The Cytoplasmic segment spans residues 299–306 (NTSTKSTQ). The helical transmembrane segment at 307-327 (IGVLLLPGFSLGFALQASLMS) threads the bilayer. At 328–415 (AQLQITKDRP…STIGNILSDS (88 aa)) the chain is on the vacuolar side. A helical membrane pass occupies residues 416–436 (IKNVFWMDLGFYALGFLFCSF). The Cytoplasmic portion of the chain corresponds to 437–458 (SSNKKLIIPKKDETPEDNLEDK).

The protein belongs to the major facilitator superfamily.

Its subcellular location is the vacuole membrane. Functionally, transporter required for vacuolar uptake of histidine and lysine. This chain is Vacuolar basic amino acid transporter 3 (VBA3), found in Saccharomyces cerevisiae (strain ATCC 204508 / S288c) (Baker's yeast).